The following is a 338-amino-acid chain: Fructose-1,6-bisphosphatase 1 (338 aa).

Ala2 is modified (N-acetylalanine). AMP is bound by residues 18 to 22 (VMEQG) and 28 to 32 (TGELT). 2 residues coordinate Mg(2+): Asp69 and Glu98. An AMP-binding site is contributed by 113-114 (KY). Mg(2+)-binding residues include Asp119, Leu121, and Asp122. 122–125 (DGSS) is a binding site for substrate. Residue Arg141 participates in AMP binding. Lys151 is subject to N6-succinyllysine. Residues 213 to 216 (NEGY), 244 to 249 (RYVGSM), Tyr265, and 275 to 277 (KLR) each bind substrate. A phosphotyrosine mark is found at Tyr216, Tyr245, and Tyr265. A Mg(2+)-binding site is contributed by Glu281.

It belongs to the FBPase class 1 family. In terms of assembly, homotetramer. The cofactor is Mg(2+). In terms of tissue distribution, detected in pancreatic beta-cell lines MIN6 and beta-TC and in liver (at protein level). Preferentially expressed in liver, with lower levels detected in pancreatic islets and intestine, and very low levels in blood, muscle, brain and spleen.

The enzyme catalyses beta-D-fructose 1,6-bisphosphate + H2O = beta-D-fructose 6-phosphate + phosphate. It functions in the pathway carbohydrate biosynthesis; gluconeogenesis. Its activity is regulated as follows. Subject to complex allosteric regulation. The enzyme can assume an active R-state, or an inactive T-state. Intermediate conformations may exist. AMP acts as an allosteric inhibitor. AMP binding affects the turnover of bound substrate and not the affinity for substrate. Fructose 2,6-bisphosphate acts as a competitive inhibitor. Fructose 2,6-bisphosphate and AMP have synergistic effects. In terms of biological role, catalyzes the hydrolysis of fructose 1,6-bisphosphate to fructose 6-phosphate in the presence of divalent cations, acting as a rate-limiting enzyme in gluconeogenesis. Plays a role in regulating glucose sensing and insulin secretion of pancreatic beta-cells. Appears to modulate glycerol gluconeogenesis in liver. Important regulator of appetite and adiposity; increased expression of the protein in liver after nutrient excess increases circulating satiety hormones and reduces appetite-stimulating neuropeptides and thus seems to provide a feedback mechanism to limit weight gain. This Mus musculus (Mouse) protein is Fructose-1,6-bisphosphatase 1 (Fbp1).